The primary structure comprises 335 residues: Nucleoid-associated protein YejK (335 aa).

The protein belongs to the YejK family.

It is found in the cytoplasm. The protein localises to the nucleoid. The polypeptide is Nucleoid-associated protein YejK (Shigella boydii serotype 18 (strain CDC 3083-94 / BS512)).